The sequence spans 580 residues: Microcin-J25 export ATP-binding/permease protein McjD (580 aa).

Transmembrane regions (helical) follow at residues 25-45 (FFSM…SPLI), 66-86 (VLLA…VFLF), 143-163 (VSQN…VVLS), 167-187 (WFSA…NTRL), 261-281 (AVIL…NGVV), and 286-306 (FIMI…IGAL). Residues 25 to 312 (FFSMLFITSL…IGALLSEIRQ (288 aa)) form the ABC transmembrane type-1 domain. Positions 345-578 (LSIRELSFSY…NEYISGLASV (234 aa)) constitute an ABC transporter domain. Residue 378–385 (GPSGSGKS) participates in ATP binding.

The protein belongs to the ABC transporter superfamily. In terms of assembly, homodimer.

It is found in the cell inner membrane. Its function is as follows. Is able to protect a cell, which harbors the plasmid pTUC100 encoding microcin J25, against microcin J25. Is required for microcin J25 export out of the producing cells. In Escherichia coli, this protein is Microcin-J25 export ATP-binding/permease protein McjD (mcjD).